Here is a 208-residue protein sequence, read N- to C-terminus: UPF0319 protein VSAL_I2129 (208 aa).

The first 21 residues, 1–21 (MKFHSFLAAGLCLLTSLSASA), serve as a signal peptide directing secretion.

Belongs to the UPF0319 family.

The sequence is that of UPF0319 protein VSAL_I2129 from Aliivibrio salmonicida (strain LFI1238) (Vibrio salmonicida (strain LFI1238)).